Reading from the N-terminus, the 865-residue chain is Protein translocase subunit SecA (865 aa).

ATP contacts are provided by residues glutamine 93, 111-115 (GEGKT), and aspartate 501. Residues cysteine 841, cysteine 843, cysteine 852, and cysteine 853 each contribute to the Zn(2+) site.

Belongs to the SecA family. In terms of assembly, monomer and homodimer. Part of the essential Sec protein translocation apparatus which comprises SecA, SecYEG and auxiliary proteins SecDF-YajC and YidC. Zn(2+) is required as a cofactor.

The protein resides in the cell inner membrane. It localises to the cytoplasm. The catalysed reaction is ATP + H2O + cellular proteinSide 1 = ADP + phosphate + cellular proteinSide 2.. Part of the Sec protein translocase complex. Interacts with the SecYEG preprotein conducting channel. Has a central role in coupling the hydrolysis of ATP to the transfer of proteins into and across the cell membrane, serving as an ATP-driven molecular motor driving the stepwise translocation of polypeptide chains across the membrane. In Helicobacter pylori (strain P12), this protein is Protein translocase subunit SecA.